A 566-amino-acid polypeptide reads, in one-letter code: Erythroid membrane-associated protein (566 aa).

Residues 1–29 (MERPSPCGSWLVGCLFTIAVFQPPVQVLG) form the signal peptide. The 110-residue stretch at 30 to 139 (DAGKVYIAPL…SSREDNVTLQ (110 aa)) folds into the Ig-like V-type domain. The Extracellular portion of the chain corresponds to 30-246 (DAGKVYIAPL…PERGSLSSPA (217 aa)). C47 and C123 form a disulfide bridge. N-linked (GlcNAc...) asparagine glycans are attached at residues N135 and N214. A helical transmembrane segment spans residues 247–267 (VALSVVLPVLGLLILLGIWLI). At 268–566 (CKQKKSKEKL…ALKGLKVPSL (299 aa)) the chain is on the cytoplasmic side. The B30.2/SPRY domain maps to 311–509 (KLKRAAANAG…LIICTELQKS (199 aa)). S509 is modified (phosphoserine).

It belongs to the immunoglobulin superfamily. BTN/MOG family. In terms of processing, glycosylated. Expressed in spleen and bone marrow.

Its subcellular location is the cell membrane. It is found in the cytoplasm. Possible role as a cell-adhesion or receptor molecule of erythroid cells. The chain is Erythroid membrane-associated protein (Ermap) from Mus musculus (Mouse).